Consider the following 293-residue polypeptide: Phosphatidate cytidylyltransferase (293 aa).

Transmembrane regions (helical) follow at residues 6 to 26 (IISA…GGWY), 51 to 71 (IAPA…SATV), 73 to 93 (PHLT…YLLF), 97 to 117 (MATI…GYLP), 157 to 177 (LLVT…AYIM), 195 to 215 (VEGS…GAWY), 218 to 238 (WPYW…VSLL), and 273 to 293 (VFTA…LNNL).

Belongs to the CDS family.

The protein resides in the cell membrane. It catalyses the reaction a 1,2-diacyl-sn-glycero-3-phosphate + CTP + H(+) = a CDP-1,2-diacyl-sn-glycerol + diphosphate. Its pathway is phospholipid metabolism; CDP-diacylglycerol biosynthesis; CDP-diacylglycerol from sn-glycerol 3-phosphate: step 3/3. The protein is Phosphatidate cytidylyltransferase (cdsA) of Synechocystis sp. (strain ATCC 27184 / PCC 6803 / Kazusa).